We begin with the raw amino-acid sequence, 282 residues long: S-formylglutathione hydrolase (282 aa).

Residue A2 is modified to N-acetylalanine. K4 carries the N6-succinyllysine modification. S149 serves as the catalytic Charge relay system. An N6-acetyllysine modification is found at K200. Catalysis depends on charge relay system residues D226 and H260.

Belongs to the esterase D family. Homodimer.

The protein localises to the cytoplasm. The protein resides in the cytoplasmic vesicle. It carries out the reaction S-formylglutathione + H2O = formate + glutathione + H(+). In terms of biological role, serine hydrolase involved in the detoxification of formaldehyde. The protein is S-formylglutathione hydrolase (Esd) of Mus musculus (Mouse).